A 421-amino-acid polypeptide reads, in one-letter code: Serine hydroxymethyltransferase (421 aa).

Residues L118 and 122 to 124 (GHL) contribute to the (6S)-5,6,7,8-tetrahydrofolate site. K226 bears the N6-(pyridoxal phosphate)lysine mark.

The protein belongs to the SHMT family. Homodimer. Pyridoxal 5'-phosphate is required as a cofactor.

Its subcellular location is the cytoplasm. It catalyses the reaction (6R)-5,10-methylene-5,6,7,8-tetrahydrofolate + glycine + H2O = (6S)-5,6,7,8-tetrahydrofolate + L-serine. Its pathway is one-carbon metabolism; tetrahydrofolate interconversion. It participates in amino-acid biosynthesis; glycine biosynthesis; glycine from L-serine: step 1/1. In terms of biological role, catalyzes the reversible interconversion of serine and glycine with tetrahydrofolate (THF) serving as the one-carbon carrier. This reaction serves as the major source of one-carbon groups required for the biosynthesis of purines, thymidylate, methionine, and other important biomolecules. Also exhibits THF-independent aldolase activity toward beta-hydroxyamino acids, producing glycine and aldehydes, via a retro-aldol mechanism. The polypeptide is Serine hydroxymethyltransferase (Mycoplasmopsis agalactiae (strain NCTC 10123 / CIP 59.7 / PG2) (Mycoplasma agalactiae)).